The chain runs to 398 residues: MSLRYLRFLTAGESHGKGLTAILEGIPANLPLSEEEINHELRRRQRGYGRGGRMKIEKDTAEILSGVRFGKTLGSPIALFIRNRDWENWKEKMAIEGEPSPSVVPFTRPRPGHADLSGGIKYNQRDLRNILERASARETAARVAVGAVCKKFLSEFGIKIGSFVVSIGQKEVEELKDKSYFANPEKLLSYHEKAEDSELRIPFPEKDEEFKTYIDEVKEKGESLGGVFEVFALNVPPGLGSHIQWDRRIDGRIAQAMMSIQAIKGVEIGLGFEAARRFGSQVHDEIGWSEGKGYFRHSNNLGGTEGGITNGMPIVVRVAMKPIPTLKNPLRSVDIETKEEMKAGKERTDIVAVPAASVVGEAMLAIVLADALLEKLGGDFMEEVKKRFEDYVNHVKSF.

2 residues coordinate NADP(+): R44 and R50. Residues 133–135, 261–262, G306, 321–325, and R347 each bind FMN; these read RAS, QA, and KPIPT.

The protein belongs to the chorismate synthase family. In terms of assembly, homotetramer. The cofactor is FMNH2.

The enzyme catalyses 5-O-(1-carboxyvinyl)-3-phosphoshikimate = chorismate + phosphate. The protein operates within metabolic intermediate biosynthesis; chorismate biosynthesis; chorismate from D-erythrose 4-phosphate and phosphoenolpyruvate: step 7/7. In terms of biological role, catalyzes the anti-1,4-elimination of the C-3 phosphate and the C-6 proR hydrogen from 5-enolpyruvylshikimate-3-phosphate (EPSP) to yield chorismate, which is the branch point compound that serves as the starting substrate for the three terminal pathways of aromatic amino acid biosynthesis. This reaction introduces a second double bond into the aromatic ring system. The chain is Chorismate synthase from Aquifex aeolicus (strain VF5).